We begin with the raw amino-acid sequence, 429 residues long: GTPase Obg (429 aa).

The Obg domain maps to 1–158 (MFVDHVKIYV…LNVILELKVL (158 aa)). The segment at 119 to 143 (AGRGGRGNSRFATPANPAPELSEKG) is disordered. One can recognise an OBG-type G domain in the interval 159 to 329 (ADVGLVGFPS…LLFAIADLLE (171 aa)). GTP-binding positions include 165–172 (GFPSVGKS), 190–194 (FTTIV), 212–215 (DLPG), 282–285 (NKMD), and 310–312 (SAV). Positions 172 and 192 each coordinate Mg(2+). In terms of domain architecture, OCT spans 351–429 (KHEAKGEDFE…LQEFEFEFVD (79 aa)).

The protein belongs to the TRAFAC class OBG-HflX-like GTPase superfamily. OBG GTPase family. Monomer. The cofactor is Mg(2+).

The protein resides in the cytoplasm. Its function is as follows. An essential GTPase which binds GTP, GDP and possibly (p)ppGpp with moderate affinity, with high nucleotide exchange rates and a fairly low GTP hydrolysis rate. Plays a role in control of the cell cycle, stress response, ribosome biogenesis and in those bacteria that undergo differentiation, in morphogenesis control. The chain is GTPase Obg from Lysinibacillus sphaericus (strain C3-41).